We begin with the raw amino-acid sequence, 247 residues long: Neurotrophic factor BDNF precursor form (247 aa).

The first 18 residues, 1 to 18 (MTILFLTMVISYFGCMKA), serve as a signal peptide directing secretion. The propeptide occupies 19-128 (APMKEANVRG…AANMSMRVRR (110 aa)). Residue N121 is glycosylated (N-linked (GlcNAc...) asparagine). 3 cysteine pairs are disulfide-bonded: C141–C208, C186–C237, and C196–C239.

This sequence belongs to the NGF-beta family. In terms of assembly, monomers and homodimers. Binds to NTRK2/TRKB. Can form heterodimers with other neurotrophin family members, such as NTF3 and NTF4 (in vitro), but the physiological relevance of this is not clear. BDNF precursor form: interacts with the heterodimer formed by NGFR and SORCS2. Mature BDNF has much lower affinity for the heterodimer formed by NGFR and SORCS2. Post-translationally, N-glycosylated and glycosulfated, contrary to mature BDNF. Mature BDNF is produced by proteolytic removal of the propeptide, catalyzed by a FURIN family member. In addition, the precursor form is proteolytically cleaved within the propeptide, but this is not an obligatory intermediate for the production of mature BDNF. Can be converted into mature BDNF by plasmin (PLG).

Its subcellular location is the secreted. In terms of biological role, important signaling molecule that activates signaling cascades downstream of NTRK2. During development, promotes the survival and differentiation of selected neuronal populations of the peripheral and central nervous systems. Participates in axonal growth, pathfinding and in the modulation of dendritic growth and morphology. Major regulator of synaptic transmission and plasticity at adult synapses in many regions of the CNS. The versatility of BDNF is emphasized by its contribution to a range of adaptive neuronal responses including long-term potentiation (LTP), long-term depression (LTD), certain forms of short-term synaptic plasticity, as well as homeostatic regulation of intrinsic neuronal excitability. Important signaling molecule that activates signaling cascades downstream of NTRK2. Activates signaling cascades via the heterodimeric receptor formed by NGFR and SORCS2. Signaling via NGFR and SORCS2 plays a role in synaptic plasticity and long-term depression (LTD). Binding to NGFR and SORCS2 promotes neuronal apoptosis. Promotes neuronal growth cone collapse. This chain is Neurotrophic factor BDNF precursor form (BDNF), found in Ursus arctos (Brown bear).